Reading from the N-terminus, the 205-residue chain is Large ribosomal subunit protein bL25 (205 aa).

The tract at residues 178-205 (FPETEPVEDEESAGEDAQGESEEKAAKE) is disordered. Residues 182–197 (EPVEDEESAGEDAQGE) are compositionally biased toward acidic residues.

Belongs to the bacterial ribosomal protein bL25 family. CTC subfamily. As to quaternary structure, part of the 50S ribosomal subunit; part of the 5S rRNA/L5/L18/L25 subcomplex. Contacts the 5S rRNA. Binds to the 5S rRNA independently of L5 and L18.

In terms of biological role, this is one of the proteins that binds to the 5S RNA in the ribosome where it forms part of the central protuberance. The chain is Large ribosomal subunit protein bL25 from Cutibacterium acnes (strain DSM 16379 / KPA171202) (Propionibacterium acnes).